The following is a 335-amino-acid chain: Glycerol-3-phosphate dehydrogenase [NAD(P)+] (335 aa).

Residues tryptophan 14, arginine 33, and lysine 111 each contribute to the NADPH site. Sn-glycerol 3-phosphate contacts are provided by lysine 111, glycine 140, and serine 142. Alanine 144 is a binding site for NADPH. Residues lysine 195, aspartate 248, serine 258, arginine 259, and asparagine 260 each coordinate sn-glycerol 3-phosphate. Lysine 195 serves as the catalytic Proton acceptor. Residue arginine 259 coordinates NADPH. Residues valine 283 and glutamate 285 each coordinate NADPH.

This sequence belongs to the NAD-dependent glycerol-3-phosphate dehydrogenase family.

Its subcellular location is the cytoplasm. It carries out the reaction sn-glycerol 3-phosphate + NAD(+) = dihydroxyacetone phosphate + NADH + H(+). The catalysed reaction is sn-glycerol 3-phosphate + NADP(+) = dihydroxyacetone phosphate + NADPH + H(+). It participates in membrane lipid metabolism; glycerophospholipid metabolism. Catalyzes the reduction of the glycolytic intermediate dihydroxyacetone phosphate (DHAP) to sn-glycerol 3-phosphate (G3P), the key precursor for phospholipid synthesis. The polypeptide is Glycerol-3-phosphate dehydrogenase [NAD(P)+] (Burkholderia mallei (strain NCTC 10247)).